The chain runs to 161 residues: Phosphopantetheine adenylyltransferase (161 aa).

Ser-11 contacts substrate. ATP contacts are provided by residues 11-12 (SF) and His-19. Positions 43, 75, and 89 each coordinate substrate. Residues 90-92 (GLR), Glu-100, and 125-131 (YSFISSS) contribute to the ATP site.

It belongs to the bacterial CoaD family. In terms of assembly, homohexamer. Mg(2+) is required as a cofactor.

Its subcellular location is the cytoplasm. The enzyme catalyses (R)-4'-phosphopantetheine + ATP + H(+) = 3'-dephospho-CoA + diphosphate. It functions in the pathway cofactor biosynthesis; coenzyme A biosynthesis; CoA from (R)-pantothenate: step 4/5. Functionally, reversibly transfers an adenylyl group from ATP to 4'-phosphopantetheine, yielding dephospho-CoA (dPCoA) and pyrophosphate. The protein is Phosphopantetheine adenylyltransferase of Staphylococcus epidermidis (strain ATCC 35984 / DSM 28319 / BCRC 17069 / CCUG 31568 / BM 3577 / RP62A).